Reading from the N-terminus, the 497-residue chain is Protein nucleotidyltransferase YdiU (497 aa).

Positions 88, 90, 91, 110, 122, 123, 173, and 180 each coordinate ATP. Asp249 functions as the Proton acceptor in the catalytic mechanism. The Mg(2+) site is built by Asn250 and Asp259. An ATP-binding site is contributed by Asp259. A disordered region spans residues 477–497 (FARYAEPPEGGGRGYRTFCGT).

The protein belongs to the SELO family. The cofactor is Mg(2+). Mn(2+) is required as a cofactor.

It catalyses the reaction L-seryl-[protein] + ATP = 3-O-(5'-adenylyl)-L-seryl-[protein] + diphosphate. It carries out the reaction L-threonyl-[protein] + ATP = 3-O-(5'-adenylyl)-L-threonyl-[protein] + diphosphate. The catalysed reaction is L-tyrosyl-[protein] + ATP = O-(5'-adenylyl)-L-tyrosyl-[protein] + diphosphate. The enzyme catalyses L-histidyl-[protein] + UTP = N(tele)-(5'-uridylyl)-L-histidyl-[protein] + diphosphate. It catalyses the reaction L-seryl-[protein] + UTP = O-(5'-uridylyl)-L-seryl-[protein] + diphosphate. It carries out the reaction L-tyrosyl-[protein] + UTP = O-(5'-uridylyl)-L-tyrosyl-[protein] + diphosphate. Nucleotidyltransferase involved in the post-translational modification of proteins. It can catalyze the addition of adenosine monophosphate (AMP) or uridine monophosphate (UMP) to a protein, resulting in modifications known as AMPylation and UMPylation. The chain is Protein nucleotidyltransferase YdiU from Methylorubrum extorquens (strain PA1) (Methylobacterium extorquens).